We begin with the raw amino-acid sequence, 354 residues long: Guanine nucleotide-binding protein G(i) subunit alpha-3 (354 aa).

Residue Gly-2 is the site of N-myristoyl glycine attachment. Cys-3 carries S-palmitoyl cysteine lipidation. The G-alpha domain maps to 32-354 (KEVKLLLLGA…KNNLKECGLY (323 aa)). Positions 35-48 (KLLLLGAGESGKST) are G1 motif. Residues Gly-42, Glu-43, Ser-44, Gly-45, Lys-46, Ser-47, Thr-48, Asp-150, Ser-151, Leu-175, Arg-176, Thr-177, Arg-178, Val-179, Lys-180, Thr-181, Val-201, Gly-203, Asn-269, Lys-270, Asp-272, Leu-273, Cys-325, Ala-326, and Thr-327 each coordinate GTP. Ser-47 is a binding site for Mg(2+). A G2 motif region spans residues 173–181 (DVLRTRVKT). Residue Thr-181 coordinates Mg(2+). A G3 motif region spans residues 196–205 (FKMFDVGGQR). Residues 265-272 (ILFLNKKD) are G4 motif. The segment at 324 to 329 (TCATDT) is G5 motif.

Belongs to the G-alpha family. G(i/o/t/z) subfamily. In terms of assembly, heterotrimeric G proteins are composed of 3 units; alpha, beta and gamma. The alpha subunit contains the guanine nucleotide binding site. GTP binding causes dissociation of the heterotrimer, liberating the individual subunits so that they can interact with downstream effector proteins. Forms a complex with CCDC88A/GIV and EGFR which leads to enhanced EGFR signaling and triggering of cell migration; ligand stimulation is required for recruitment of GNAI3 to the complex. Interacts (inactive GDP-bound form) with CCDC88A/GIV (via GBA motif); the interaction leads to activation of GNAI3. Interacts (inactive GDP-bound form) with CCDC88C/DAPLE (via GBA motif); the interaction leads to activation of GNAI3. Interacts (inactive GDP-bound form) with NUCB1 (via GBA motif) and NUCB2 (via GBA motif); the interaction leads to activation of GNAI3. Interacts (inactive GDP-bound form) with PLCD4 (via GBA motif); the interaction leads to activation of GNAI3. Interacts with INSR; the interaction is probably mediated by CCDC88A/GIV. Interacts with GPSM1. Interacts (GDP-bound form) with GPSM2 (via GoLoco domains). Does not interact with RGS2. Interacts with RGS8 and RGS10; this strongly enhances the intrinsic GTPase activity. Interacts with RGS12. Interacts with RGS16; this strongly enhances the intrinsic GTPase activity. Interacts (via active GTP- or inactive GDP-bound form) with RGS14. Interacts (via active GTP-bound form) with TRPC5 (via ANK repeats) in a homotetrameric ion channel; the interaction is direct and activates the channel activity. As to expression, ubiquitous.

The protein localises to the cytoplasm. It is found in the cell membrane. It localises to the cytoskeleton. Its subcellular location is the microtubule organizing center. The protein resides in the centrosome. Its function is as follows. Heterotrimeric guanine nucleotide-binding proteins (G proteins) function as transducers downstream of G protein-coupled receptors (GPCRs) in numerous signaling cascades. The alpha chain contains the guanine nucleotide binding site and alternates between an active, GTP-bound state and an inactive, GDP-bound state. Signaling by an activated GPCR promotes GDP release and GTP binding. The alpha subunit has a low GTPase activity that converts bound GTP to GDP, thereby terminating the signal. Both GDP release and GTP hydrolysis are modulated by numerous regulatory proteins. Signaling is mediated via effector proteins, such as adenylate cyclase. Inhibits adenylate cyclase activity, leading to decreased intracellular cAMP levels. Stimulates the activity of receptor-regulated K(+) channels. The active GTP-bound form prevents the association of RGS14 with centrosomes and is required for the translocation of RGS14 from the cytoplasm to the plasma membrane. May play a role in cell division. The active GTP-bound form activates the calcium permeant TRPC5 ion channels. The sequence is that of Guanine nucleotide-binding protein G(i) subunit alpha-3 (Gnai3) from Rattus norvegicus (Rat).